A 193-amino-acid chain; its full sequence is Riboflavin kinase (193 aa).

The H-T-H motif-like stretch occupies residues 1 to 59 (MGISQQAASQHLRELEDEGLITRNAEGKGISVMVTDKGRHELLRVYNILHDSLHSRPDH). The interval 60–193 (VEITGTLVSG…TIRIPLEQED (134 aa)) is riboflavin kinase. 69–74 (GMNEGA) contributes to the CDP binding site. Mg(2+) is bound by residues T98 and N100. Residues T156 and E164 each coordinate FMN. Residue 169–172 (LDIR) participates in CDP binding.

Belongs to the archaeal riboflavin kinase family. Mg(2+) is required as a cofactor.

It carries out the reaction riboflavin + CTP = CDP + FMN + H(+). It functions in the pathway cofactor biosynthesis; FMN biosynthesis; FMN from riboflavin (CTP route): step 1/1. Its function is as follows. Catalyzes the CTP-dependent phosphorylation of riboflavin (vitamin B2) to form flavin mononucleotide (FMN). This chain is Riboflavin kinase (ribK), found in Cenarchaeum symbiosum (strain A).